The following is a 121-amino-acid chain: Aspartate 1-decarboxylase (121 aa).

Ser-25 acts as the Schiff-base intermediate with substrate; via pyruvic acid in catalysis. Position 25 is a pyruvic acid (Ser) (Ser-25). Thr-57 lines the substrate pocket. The active-site Proton donor is Tyr-58. 73-75 (GAA) is a binding site for substrate.

Belongs to the PanD family. In terms of assembly, heterooctamer of four alpha and four beta subunits. The cofactor is pyruvate. Post-translationally, is synthesized initially as an inactive proenzyme, which is activated by self-cleavage at a specific serine bond to produce a beta-subunit with a hydroxyl group at its C-terminus and an alpha-subunit with a pyruvoyl group at its N-terminus.

The protein localises to the cytoplasm. It carries out the reaction L-aspartate + H(+) = beta-alanine + CO2. It participates in cofactor biosynthesis; (R)-pantothenate biosynthesis; beta-alanine from L-aspartate: step 1/1. Its function is as follows. Catalyzes the pyruvoyl-dependent decarboxylation of aspartate to produce beta-alanine. The polypeptide is Aspartate 1-decarboxylase (Sulfurimonas denitrificans (strain ATCC 33889 / DSM 1251) (Thiomicrospira denitrificans (strain ATCC 33889 / DSM 1251))).